The following is a 221-amino-acid chain: Probable septum site-determining protein MinC (221 aa).

The protein belongs to the MinC family. In terms of assembly, interacts with MinD and FtsZ.

In terms of biological role, cell division inhibitor that blocks the formation of polar Z ring septums. Rapidly oscillates between the poles of the cell to destabilize FtsZ filaments that have formed before they mature into polar Z rings. Prevents FtsZ polymerization. The protein is Probable septum site-determining protein MinC of Aliivibrio fischeri (strain MJ11) (Vibrio fischeri).